The primary structure comprises 260 residues: Phosphatidate cytidylyltransferase (260 aa).

The next 7 helical transmembrane spans lie at 9-29 (IIAL…LMIF), 46-66 (MIKF…IIML), 70-90 (AGPW…FIVL), 102-122 (FMDA…FMFF), 130-150 (LHYI…AYLF), 172-192 (FIGG…FVDF), and 196-216 (VWIL…GDLV).

Belongs to the CDS family.

Its subcellular location is the cell membrane. It carries out the reaction a 1,2-diacyl-sn-glycero-3-phosphate + CTP + H(+) = a CDP-1,2-diacyl-sn-glycerol + diphosphate. It participates in phospholipid metabolism; CDP-diacylglycerol biosynthesis; CDP-diacylglycerol from sn-glycerol 3-phosphate: step 3/3. The sequence is that of Phosphatidate cytidylyltransferase (cdsA) from Staphylococcus aureus (strain COL).